The primary structure comprises 448 residues: Phosphohexose mutases (448 aa).

The active-site Phosphoserine intermediate is the Ser-97. Mg(2+) is bound by residues Ser-97, Asp-237, Asp-239, and Asp-241.

The protein belongs to the phosphohexose mutase family. Mg(2+) is required as a cofactor.

It carries out the reaction alpha-D-glucose 1-phosphate = alpha-D-glucose 6-phosphate. The catalysed reaction is alpha-D-mannose 1-phosphate = D-mannose 6-phosphate. It functions in the pathway nucleotide-sugar biosynthesis; GDP-alpha-D-mannose biosynthesis; alpha-D-mannose 1-phosphate from D-fructose 6-phosphate: step 2/2. Involved in xanthan production. In Xanthomonas campestris pv. campestris (strain ATCC 33913 / DSM 3586 / NCPPB 528 / LMG 568 / P 25), this protein is Phosphohexose mutases (xanA).